Here is a 285-residue protein sequence, read N- to C-terminus: Urease accessory protein UreD 1 (285 aa).

The protein belongs to the UreD family. As to quaternary structure, ureD, UreF and UreG form a complex that acts as a GTP-hydrolysis-dependent molecular chaperone, activating the urease apoprotein by helping to assemble the nickel containing metallocenter of UreC. The UreE protein probably delivers the nickel.

Its subcellular location is the cytoplasm. In terms of biological role, required for maturation of urease via the functional incorporation of the urease nickel metallocenter. The polypeptide is Urease accessory protein UreD 1 (Pseudomonas syringae pv. tomato (strain ATCC BAA-871 / DC3000)).